We begin with the raw amino-acid sequence, 415 residues long: PRKCA-binding protein (415 aa).

Residues 22–105 (KVTLQKDAQN…EVTIHYNKLQ (84 aa)) enclose the PDZ domain. Zn(2+) is bound by residues C44 and C46. The residue at position 82 (T82) is a Phosphothreonine. Positions 144–357 (LCNDGLVKRL…CYAVLRDADV (214 aa)) constitute an AH domain. The interval 376-415 (EEFTDGEEEEEEEDTAAGEPSRDTRGAAGPLDKGGSWCDS) is disordered. A compositionally biased stretch (acidic residues) spans 377–391 (EFTDGEEEEEEEDTA). A lipid anchor (S-palmitoyl cysteine; by DHHC8) is attached at C413.

In terms of assembly, monomer and homodimer. Interacts with CXADR. Interacts presynaptically with the glutamate receptors GRIA2, GRIA3, GRIK3, isoform 3 of GRIA4, isoform A of GRM4, GRM7 and GRM8; with NAPA and NAPB; and with BTG2. The interaction with NAPA and NAPB disrupts the interaction with GRIA2, conducting to the internalization of GRIA2. Interacts with PRKCA; with the amine transporters SLC6A2 and SLC6A3; with the channels ASIC1 and ASIC2; with the GTP-binding proteins ARF1 and ARF3; with the ephrin receptor tyrosine kinases EPHA7, EPHB1 and EPHB2; with ERBB2 and through its PDZ domain with the C-terminal tail of PRLHR. Interacts with UNC5A. Interacts (via AH domain) with NCS1/FREQ; in a calcium-dependent manner. Interacts with F-actin and associates with the ARP2/3 complex. Interacts (via PDZ domain) with ARF1 (activated); the interaction blocks Arp2/3 complex inhibition. Interacts with SORCS3. Phosphorylation at Thr-82 appears to inhibit the interaction with AMPA receptors. Post-translationally, palmitoylation on Cys-413 is essential for long-term synaptic depression (LTD). Ubiquitous.

Its subcellular location is the cytoplasm. It is found in the perinuclear region. It localises to the membrane. The protein localises to the postsynaptic density. The protein resides in the synapse. Its subcellular location is the synaptosome. It is found in the cytoskeleton. Functionally, probable adapter protein that bind to and organize the subcellular localization of a variety of membrane proteins containing some PDZ recognition sequence. Involved in the clustering of various receptors, possibly by acting at the receptor internalization level. Plays a role in synaptic plasticity by regulating the trafficking and internalization of AMPA receptors. May be regulated upon PRKCA activation. May regulate ASIC1/ASIC3 channel. Regulates actin polymerization by inhibiting the actin-nucleating activity of the Arp2/3 complex; the function is competitive with nucleation promoting factors and is linked to neuronal morphology regulation and AMPA receptor (AMPAR) endocytosis. Via interaction with the Arp2/3 complex involved in regulation of synaptic plasicity of excitatory synapses and required for spine shrinkage during long-term depression (LTD). Involved in regulation of astrocyte morphology, antagonistic to Arp2/3 complex activator WASL/N-WASP function. The protein is PRKCA-binding protein (PICK1) of Homo sapiens (Human).